The primary structure comprises 354 residues: 2-methylisoborneol synthase (354 aa).

The interval 1–29 is disordered; that stretch reads MIELIGHETPVPSQQQHTGGVRGTSACTP. The Mg(2+) site is built by Asp113, Asp114, Glu118, Asn264, Ser268, and Glu272.

It belongs to the terpene synthase family. 2-methylisoborneol synthase subfamily. It depends on Mg(2+) as a cofactor.

It catalyses the reaction (E)-2-methylgeranyl diphosphate + H2O = 2-methylisoborneol + diphosphate. Its function is as follows. Catalyzes the cyclization of 2-methylgeranyl diphosphate (2-MeGPP) to 2-methylisoborneol (2-MIB), which likely involves the intermediacy of 2-methyllinalyl diphosphate. In Saccharopolyspora erythraea (strain ATCC 11635 / DSM 40517 / JCM 4748 / NBRC 13426 / NCIMB 8594 / NRRL 2338), this protein is 2-methylisoborneol synthase.